A 399-amino-acid polypeptide reads, in one-letter code: Exodeoxyribonuclease 7 large subunit (399 aa).

It belongs to the XseA family. Heterooligomer composed of large and small subunits.

It is found in the cytoplasm. It carries out the reaction Exonucleolytic cleavage in either 5'- to 3'- or 3'- to 5'-direction to yield nucleoside 5'-phosphates.. Bidirectionally degrades single-stranded DNA into large acid-insoluble oligonucleotides, which are then degraded further into small acid-soluble oligonucleotides. This Clostridium acetobutylicum (strain ATCC 824 / DSM 792 / JCM 1419 / IAM 19013 / LMG 5710 / NBRC 13948 / NRRL B-527 / VKM B-1787 / 2291 / W) protein is Exodeoxyribonuclease 7 large subunit.